The following is a 262-amino-acid chain: Membrane protein US15 (262 aa).

7 helical membrane-spanning segments follow: residues 46–66 (GAVG…CYAA), 77–97 (CLTE…VIFI), 108–128 (IGVL…ICLC), 133–153 (LVIS…GVAL), 163–183 (QIVV…VVIL), 186–206 (GWSW…CLAV), and 226–246 (LLAA…VLRI).

It belongs to the HHV-5 US12 protein family.

Its subcellular location is the host membrane. The chain is Membrane protein US15 (US15) from Human cytomegalovirus (strain Merlin) (HHV-5).